Consider the following 372-residue polypeptide: Glutamate 5-kinase (372 aa).

Lysine 14 contributes to the ATP binding site. Substrate is bound by residues serine 54, aspartate 141, and asparagine 153. ATP is bound by residues 173-174 (TD) and 215-221 (TGGMATK). In terms of domain architecture, PUA spans 280-358 (RGQLVIDAGA…DSIEEVLGYD (79 aa)).

It belongs to the glutamate 5-kinase family.

It localises to the cytoplasm. It catalyses the reaction L-glutamate + ATP = L-glutamyl 5-phosphate + ADP. The protein operates within amino-acid biosynthesis; L-proline biosynthesis; L-glutamate 5-semialdehyde from L-glutamate: step 1/2. Catalyzes the transfer of a phosphate group to glutamate to form L-glutamate 5-phosphate. This chain is Glutamate 5-kinase, found in Shewanella pealeana (strain ATCC 700345 / ANG-SQ1).